Consider the following 341-residue polypeptide: MFLSDFDYELPPELIAQHPASRRDASRLLTLDRLSGAIGEATVASIAAQFLPGDLLVLNDTRVIPARLHGHKESGGAVEIFLVRRVAGEPECWSCLIKASKSPKNGCRVVFPGGVTATVLERDGGDWRVLFEGSDDFMAWLEQTGSMPLPPYIKRAPEGEDLERYQTVFAREKGAVAAPTAGLHFTPAILDEIRGRGVEIVSVTLHVGLGTFMPIRVEDLSEHTMHRELYRIPQETAAAIRRTKERGGRVVALGTTSLRALEHAAASGEVAAGEREADIFILPGYRFRVVDALITNFHLPKSTLFMLVCAFAGKEAMLEAYREAVSRRFRFFSYGDAMFIG.

Belongs to the QueA family. In terms of assembly, monomer.

The protein localises to the cytoplasm. The enzyme catalyses 7-aminomethyl-7-carbaguanosine(34) in tRNA + S-adenosyl-L-methionine = epoxyqueuosine(34) in tRNA + adenine + L-methionine + 2 H(+). It functions in the pathway tRNA modification; tRNA-queuosine biosynthesis. Its function is as follows. Transfers and isomerizes the ribose moiety from AdoMet to the 7-aminomethyl group of 7-deazaguanine (preQ1-tRNA) to give epoxyqueuosine (oQ-tRNA). This chain is S-adenosylmethionine:tRNA ribosyltransferase-isomerase, found in Citrifermentans bemidjiense (strain ATCC BAA-1014 / DSM 16622 / JCM 12645 / Bem) (Geobacter bemidjiensis).